The chain runs to 144 residues: 3-hydroxyacyl-[acyl-carrier-protein] dehydratase FabZ (144 aa).

Residue His-49 is part of the active site.

It belongs to the thioester dehydratase family. FabZ subfamily.

The protein localises to the cytoplasm. The catalysed reaction is a (3R)-hydroxyacyl-[ACP] = a (2E)-enoyl-[ACP] + H2O. In terms of biological role, involved in unsaturated fatty acids biosynthesis. Catalyzes the dehydration of short chain beta-hydroxyacyl-ACPs and long chain saturated and unsaturated beta-hydroxyacyl-ACPs. In Alkaliphilus oremlandii (strain OhILAs) (Clostridium oremlandii (strain OhILAs)), this protein is 3-hydroxyacyl-[acyl-carrier-protein] dehydratase FabZ.